Consider the following 509-residue polypeptide: 2-isopropylmalate synthase (509 aa).

The region spanning 5–267 (IQIFDTTLRD…QTALNLEETK (263 aa)) is the Pyruvate carboxyltransferase domain. Mn(2+) is bound by residues Asp-14, His-202, His-204, and Asn-238. The interval 391 to 509 (KLETLQLQYV…AAENVEKVGN (119 aa)) is regulatory domain.

Belongs to the alpha-IPM synthase/homocitrate synthase family. LeuA type 1 subfamily. As to quaternary structure, homodimer. Requires Mn(2+) as cofactor.

The protein localises to the cytoplasm. The enzyme catalyses 3-methyl-2-oxobutanoate + acetyl-CoA + H2O = (2S)-2-isopropylmalate + CoA + H(+). It functions in the pathway amino-acid biosynthesis; L-leucine biosynthesis; L-leucine from 3-methyl-2-oxobutanoate: step 1/4. Catalyzes the condensation of the acetyl group of acetyl-CoA with 3-methyl-2-oxobutanoate (2-ketoisovalerate) to form 3-carboxy-3-hydroxy-4-methylpentanoate (2-isopropylmalate). The polypeptide is 2-isopropylmalate synthase (Staphylococcus aureus (strain MRSA252)).